Here is a 264-residue protein sequence, read N- to C-terminus: Phosphonoacetaldehyde hydrolase (264 aa).

The Nucleophile role is filled by Asp-9. Mg(2+)-binding residues include Asp-9 and Ala-11. Lys-50 serves as the catalytic Schiff-base intermediate with substrate. Asp-183 is a binding site for Mg(2+).

Belongs to the HAD-like hydrolase superfamily. PhnX family. In terms of assembly, homodimer. Requires Mg(2+) as cofactor.

The catalysed reaction is phosphonoacetaldehyde + H2O = acetaldehyde + phosphate + H(+). Involved in phosphonate degradation. The polypeptide is Phosphonoacetaldehyde hydrolase (Bacillus cytotoxicus (strain DSM 22905 / CIP 110041 / 391-98 / NVH 391-98)).